The following is a 503-amino-acid chain: Annexin A11 (503 aa).

Composition is skewed to pro residues over residues 1 to 17, 80 to 145, and 155 to 169; these read MSYPGYPPPPGGYPPAP, GYPP…PYPG, and SPVPPPGQQPMPSYP. Disordered stretches follow at residues 1 to 35 and 56 to 178; these read MSYPGYPPPPGGYPPAPGGGAWGGAGYPPPSMPPI and AANM…GTVT. Annexin repeat units follow at residues 198–269, 270–341, 353–425, and 429–500; these read FDPL…ALMK, TPIL…SLSQ, SLVQ…AVVK, and NTPA…KICG. An N6-acetyllysine mark is found at Lys-246 and Lys-253. Lys-477 carries the N6-acetyllysine modification.

This sequence belongs to the annexin family. As to quaternary structure, interacts with PDCD6 in a calcium-dependent manner. Interacts with KIF23 during cytokinesis. Interacts with S100A6.

It localises to the cytoplasm. The protein localises to the melanosome. The protein resides in the nucleus envelope. It is found in the nucleus. Its subcellular location is the nucleoplasm. It localises to the cytoskeleton. The protein localises to the spindle. Functionally, required for midbody formation and completion of the terminal phase of cytokinesis. Binds specifically to calcyclin in a calcium-dependent manner. This chain is Annexin A11 (ANXA11), found in Oryctolagus cuniculus (Rabbit).